The chain runs to 459 residues: Ribulose bisphosphate carboxylase (459 aa).

Asn-111 contacts substrate. Lys-166 acts as the Proton acceptor in catalysis. Residue Lys-168 participates in substrate binding. Mg(2+) is bound by residues Lys-191, Asp-193, and Glu-194. Lys-191 bears the N6-carboxylysine mark. His-287 serves as the catalytic Proton acceptor. Positions 288, 321, and 368 each coordinate substrate.

Belongs to the RuBisCO large chain family. Type II subfamily. In terms of assembly, homodimer. It depends on Mg(2+) as a cofactor.

The catalysed reaction is 2 (2R)-3-phosphoglycerate + 2 H(+) = D-ribulose 1,5-bisphosphate + CO2 + H2O. It catalyses the reaction D-ribulose 1,5-bisphosphate + O2 = 2-phosphoglycolate + (2R)-3-phosphoglycerate + 2 H(+). Functionally, ruBisCO catalyzes two reactions: the carboxylation of D-ribulose 1,5-bisphosphate, the primary event in carbon dioxide fixation, as well as the oxidative fragmentation of the pentose substrate. Both reactions occur simultaneously and in competition at the same active site. This is Ribulose bisphosphate carboxylase from Albidiferax ferrireducens (strain ATCC BAA-621 / DSM 15236 / T118) (Rhodoferax ferrireducens).